Here is a 103-residue protein sequence, read N- to C-terminus: Large ribosomal subunit protein bL21 (103 aa).

This sequence belongs to the bacterial ribosomal protein bL21 family. Part of the 50S ribosomal subunit. Contacts protein L20.

In terms of biological role, this protein binds to 23S rRNA in the presence of protein L20. This is Large ribosomal subunit protein bL21 from Pseudomonas fluorescens (strain Pf0-1).